We begin with the raw amino-acid sequence, 311 residues long: Formimidoylglutamase (311 aa).

His-130, Asp-155, His-157, Asp-159, Cys-242, and Asp-244 together coordinate Mn(2+).

Belongs to the arginase family. The cofactor is Mn(2+).

It carries out the reaction N-formimidoyl-L-glutamate + H2O = formamide + L-glutamate. The protein operates within amino-acid degradation; L-histidine degradation into L-glutamate; L-glutamate from N-formimidoyl-L-glutamate (hydrolase route): step 1/1. Catalyzes the conversion of N-formimidoyl-L-glutamate to L-glutamate and formamide. The chain is Formimidoylglutamase from Staphylococcus haemolyticus (strain JCSC1435).